A 727-amino-acid chain; its full sequence is Telomere repeats-binding bouquet formation protein 1 (727 aa).

2 ARM repeats span residues 101-144 (ELFE…RETG) and 339-382 (NGLP…GEYP). Residues 398-446 (ENNLEEHWRKAKEILHRIEQLEREGNEEEIQRENYQDNISSMNISIQNT) are a coiled coil. The span at 457–468 (RGSKAEDEDKSH) shows a compositional bias: basic and acidic residues. A disordered region spans residues 457–493 (RGSKAEDEDKSHSRQLQSYKSHGVMSKACTNDDQMKT). Residues 523–662 (QNLHEETTFE…QRLSNESTTP (140 aa)) are interaction with TERF1. A Phosphothreonine modification is found at threonine 648. Positions 666-719 (KKRRIRKNFTEEEVNYLFNGVKKMGNHWNSILWSFPFQQGRKAVDLAHKYHKLT) constitute a Myb-like domain.

Belongs to the TERB1 family. As to quaternary structure, component of the MAJIN-TERB1-TERB2 complex, composed of MAJIN, TERB1 and TERB2. Interacts with TERF1, STAG3 and SUN1. Interacts (via Myb-like domain) with the cohesin complex; probably mediated via interaction with STAG3. Post-translationally, phosphorylated by CDK. Phosphorylation by CDK takes place in late prophase when the cap exchange is prominent. is important for the stabilization of telomere attachment but dispenable for the cap exchange.

The protein localises to the chromosome. It localises to the telomere. Its subcellular location is the nucleus inner membrane. Its function is as follows. Meiosis-specific telomere-associated protein involved in meiotic telomere attachment to the nucleus inner membrane, a crucial step for homologous pairing and synapsis. Component of the MAJIN-TERB1-TERB2 complex, which promotes telomere cap exchange by mediating attachment of telomeric DNA to the inner nuclear membrane and replacement of the protective cap of telomeric chromosomes: in early meiosis, the MAJIN-TERB1-TERB2 complex associates with telomeric DNA and the shelterin/telosome complex. During prophase, the complex matures and promotes release of the shelterin/telosome complex from telomeric DNA. In the MAJIN-TERB1-TERB2 complex, TERB1 probably mediates association with the shelterin/telosome complex via interaction with TERF1, promoting priming telomeric DNA attachment'. Promotes telomere association with the nuclear envelope and deposition of the SUN-KASH/LINC complex. Also recruits cohesin to telomeres to develop structural rigidity. The polypeptide is Telomere repeats-binding bouquet formation protein 1 (Homo sapiens (Human)).